A 79-amino-acid polypeptide reads, in one-letter code: Small integral membrane protein 40 (79 aa).

Residues 35 to 55 traverse the membrane as a helical segment; sequence FFIFLALFLTLLMLEAAYKLL.

It is found in the membrane. This chain is Small integral membrane protein 40, found in Homo sapiens (Human).